The primary structure comprises 362 residues: Red-sensitive opsin (362 aa).

The Extracellular segment spans residues 1-49 (MAAWEAAFAARRRHEEEDTTRDSVFTYTNSNNTRGPFEGPNYHIAPRWV). Residue Asn31 is glycosylated (N-linked (GlcNAc...) asparagine). A helical membrane pass occupies residues 50–74 (YNLTSVWMIFVVAASVFTNGLVLVA). The Cytoplasmic segment spans residues 75 to 86 (TWKFKKLRHPLN). Residues 87–112 (WILVNLAVADLGETVIASTISVINQI) traverse the membrane as a helical segment. Residues 113-126 (SGYFILGHPMCVVE) lie on the Extracellular side of the membrane. Cys123 and Cys200 are disulfide-bonded. Residues 127-146 (GYTVSACGITALWSLAIISW) form a helical membrane-spanning segment. Residues 147–165 (ERWFVVCKPFGNIKFDGKL) are Cytoplasmic-facing. Residues 166–189 (AVAGILFSWLWSCAWTAPPIFGWS) form a helical membrane-spanning segment. The Extracellular portion of the chain corresponds to 190 to 215 (RYWPHGLKTSCGPDVFSGSSDPGVQS). The helical transmembrane segment at 216-243 (YMVVLMVTCCFFPLAIIILCYLQVWLAI) threads the bilayer. The Cytoplasmic segment spans residues 244-265 (RAVAAQQKESESTQKAEKEVSR). The chain crosses the membrane as a helical span at residues 266-289 (MVVVMIVAYCFCWGPYTFFACFAA). Residues 290-297 (ANPGYAFH) lie on the Extracellular side of the membrane. Residues 298–322 (PLAAALPAYFAKSATIYNPIIYVFM) traverse the membrane as a helical segment. Lys309 is modified (N6-(retinylidene)lysine). The Cytoplasmic segment spans residues 323–362 (NRQFRNCILQLFGKKVDDGSEVSTSRTEVSSVSNSSVSPA).

The protein belongs to the G-protein coupled receptor 1 family. Opsin subfamily. Phosphorylated on some or all of the serine and threonine residues present in the C-terminal region. In terms of tissue distribution, the color pigments are found in the cone photoreceptor cells.

It is found in the membrane. Visual pigments are the light-absorbing molecules that mediate vision. They consist of an apoprotein, opsin, covalently linked to cis-retinal. The sequence is that of Red-sensitive opsin from Gallus gallus (Chicken).